The sequence spans 308 residues: SAP30-binding protein (308 aa).

Residues 15–101 are disordered; the sequence is AEDSEPESDG…EAEKRDPQEL (87 aa). Over residues 16–26 the composition is skewed to acidic residues; sequence EDSEPESDGEA. 4 positions are modified to phosphoserine: Ser-18, Ser-22, Ser-43, and Ser-52. Positions 57-78 are enriched in acidic residues; it reads DEDGYEEEEDENSRQSEDDDSE. Residues 79–99 show a composition bias toward basic and acidic residues; sequence TEKPEADDPKDNTEAEKRDPQ. Lys-95 is covalently cross-linked (Glycyl lysine isopeptide (Lys-Gly) (interchain with G-Cter in SUMO2)). Position 113 is a phosphoserine (Ser-113). Glycyl lysine isopeptide (Lys-Gly) (interchain with G-Cter in SUMO2) cross-links involve residues Lys-220, Lys-304, and Lys-305.

The protein belongs to the HCNGP family. In terms of assembly, interacts with histone deacetylase complex subunit SAP30.

The protein localises to the nucleus. In terms of biological role, plays a role in transcriptional repression by promoting histone deacetylase activity, leading to deacetylation of histone H3. May be involved in the regulation of beta-2-microglobulin genes. Functionally, (Microbial infection) Involved in transcriptional repression of HHV-1 genes TK and gC. The protein is SAP30-binding protein of Homo sapiens (Human).